A 183-amino-acid chain; its full sequence is MERVQPLEENVGNAARPRFERNKLLLVASVIQGLGLLLCFTYICLHFSALQVSHRYPRIQSIKVQFTEYKKEKGFILTSQKEDEIMKVQNNSVIINCDGFYLISLKGYFSQEVNISLHYQKDEEPLFQLKKVRSVNSLMVASLTYKDKVYLNVTTDNTSLDDFHVNGGELILIHQNPGEFCVL.

The Cytoplasmic segment spans residues 1 to 23 (MERVQPLEENVGNAARPRFERNK). Residues 24-50 (LLLVASVIQGLGLLLCFTYICLHFSAL) form a helical; Signal-anchor for type II membrane protein membrane-spanning segment. Residues 51–173 (QVSHRYPRIQ…HVNGGELILI (123 aa)) form the THD domain. Over 51–183 (QVSHRYPRIQ…HQNPGEFCVL (133 aa)) the chain is Extracellular. N90, N114, N152, and N157 each carry an N-linked (GlcNAc...) asparagine glycan. The cysteines at positions 97 and 181 are disulfide-linked.

Belongs to the tumor necrosis factor family. As to quaternary structure, homotrimer.

The protein resides in the membrane. Its function is as follows. Cytokine that binds to TNFRSF4. Co-stimulates T-cell proliferation and cytokine production. The polypeptide is Tumor necrosis factor ligand superfamily member 4 (TNFSF4) (Homo sapiens (Human)).